Here is a 413-residue protein sequence, read N- to C-terminus: Hemolin (413 aa).

The first 18 residues, 1–18 (MVSKSIVALAACVAMCVA), serve as a signal peptide directing secretion. Ig-like C2-type domains follow at residues 25-112 (PVLK…HIIS), 121-215 (PTTF…LVGY), 233-322 (PMYV…VKLT), and 327-411 (PRFT…TLVI). Intrachain disulfides connect C46–C97, C141–C199, C252–C305, and C349–C395. The N-linked (GlcNAc...) asparagine glycan is linked to N283.

The protein belongs to the hemolin family. Hemolymph.

It localises to the secreted. Functionally, insect-immune protein with antimicrobial activity. Forms a protein complex at the bacterial surface. Can inhibit hemocyte aggregation. The polypeptide is Hemolin (Manduca sexta (Tobacco hawkmoth)).